A 125-amino-acid chain; its full sequence is Mesotocin-neurophysin MT (125 aa).

The first 19 residues, 1-19, serve as a signal peptide directing secretion; the sequence is MSYTALAVTFFGWLALSSA. Cysteines 20 and 25 form a disulfide. Glycine amide is present on Gly28. Disulfide bonds link Cys42–Cys86, Cys45–Cys59, Cys53–Cys76, Cys60–Cys66, Cys93–Cys106, Cys100–Cys118, and Cys107–Cys112.

Belongs to the vasopressin/oxytocin family. In terms of tissue distribution, mesotocin is produced by magnocellular preoptic neurons in the hypothalamus in amphibians, reptiles and birds.

The protein resides in the secreted. Its function is as follows. Mesotocin is a diuretic hormone. This is Mesotocin-neurophysin MT from Bufo japonicus (Japanese common toad).